Here is a 669-residue protein sequence, read N- to C-terminus: Probable serine/threonine-protein kinase DDB_G0291918 (669 aa).

Residues 13–360 form the Protein kinase domain; sequence YNNIKELGRG…LKETLNHPFL (348 aa). Residues 19–27 and K42 contribute to the ATP site; that span reads LGRGVSGVV. D141 serves as the catalytic Proton acceptor. Low complexity predominate over residues 396–405; sequence QNQQQQQQQQ. Disordered regions lie at residues 396–518 and 530–550; these read QNQQ…APTF and FPKLLPPPTKDAPPLETMNWR. Polar residues predominate over residues 406–418; the sequence is KSFSTSSLPQVNH. Composition is skewed to low complexity over residues 419 to 449 and 457 to 494; these read NNDTNNNNNNNNNNNNNNNNNNNNNNNNNNN and QSNNSSSSSSSSSPPSPTISKSSPSSLSSSLSPSSSTD.

Belongs to the protein kinase superfamily. Ser/Thr protein kinase family.

It catalyses the reaction L-seryl-[protein] + ATP = O-phospho-L-seryl-[protein] + ADP + H(+). The catalysed reaction is L-threonyl-[protein] + ATP = O-phospho-L-threonyl-[protein] + ADP + H(+). This Dictyostelium discoideum (Social amoeba) protein is Probable serine/threonine-protein kinase DDB_G0291918.